Reading from the N-terminus, the 285-residue chain is MTVTDHREAMIEARAAVTDVREAMDAYAEEFAADVNSIRTDSRHRENIRDMRAAVDAYCESFATAVSTHHDETAALRADLEATAAAFDAYTTAFAADAAAMHDVSALHRDIEALREEFRAVTTDFEDYTTDEFAPAVGALHADAAETAASFTAKQEGFEAYRHDVHESAVPALTADIAATRADFDDTAASFAAYARAFYGHTDDATAQTDADDTTAQTDVLSGQATVTRAQPEEDDTPEDMVQCRVCEEYYQAITEPHLQTHEMTIDGYRDEYGEDVPLRPDDHA.

6 tandem repeats follow at residues 22–52 (EAMDAYAEEFAADVNSIRTDSRHRENIRDMR), 53–84 (AAVDAYCESFATAVSTHHDETAALRADLEATA), 85–122 (AAFDAYTTAFAADAAAMHDVSALHRDIEALREEFRAVT), 123–155 (TDFEDYTTDEFAPAVGALHADAAETAASFTAKQ), 156–188 (EGFEAYRHDVHESAVPALTADIAATRADFDDTA), and 189–220 (ASFAAYARAFYGHTDDATAQTDADDTTAQTDV). Residues 22 to 220 (EAMDAYAEEF…ADDTTAQTDV (199 aa)) are 6 X approximate tandem repeats.

The protein belongs to the halobacterial gas vesicle GvpC family.

Its subcellular location is the gas vesicle. Confers stability, involved in shaping gas vesicles (GV), hollow, gas filled proteinaceous nanostructures. GVs allow positioning of halobacteria at an optimal depth for growth in the poorly aerated, shallow brine pools of their habitat. Its function is as follows. Expression of 2 c-vac DNA fragments containing 2 divergently transcribed regions (gvpE-gvpF-gvpG-gvpH-gvpI-gvpJ-gvpK-gvpL-gvpM and gvpA-gvpC-gvpN-gvpO) allows H.volcanii to produce gas vesicles. In Halobacterium salinarum (strain ATCC 700922 / JCM 11081 / NRC-1) (Halobacterium halobium), this protein is Gas vesicle protein C2.